Here is a 4684-residue protein sequence, read N- to C-terminus: Plectin (4684 aa).

The tract at residues 1–1470 is globular 1; the sequence is MVAGMLMPRD…SELTTLTSQY (1470 aa). Phosphoserine is present on residues Phe20 and Arg21. Val26 carries the phosphotyrosine modification. Gly42 carries the phosphoserine modification. Thr113 bears the Phosphothreonine mark. Ser125 and Ser149 each carry phosphoserine. The tract at residues 144–179 is disordered; the sequence is ELEEVSPETPVVPATTQRTLARPGPEPAPATDERDR. An actin-binding region spans residues 175–400; that stretch reads DERDRVQKKT…YVSSLYDAMP (226 aa). 2 consecutive Calponin-homology (CH) domains span residues 179-282 and 295-400; these read RVQK…LHFQ and MTAK…DAMP. Residues 645–710 form a Spectrin 1 repeat; the sequence is LQSVQRRPEL…SIEEFRAKIE (66 aa). Residue Ser720 is modified to Phosphoserine. Spectrin repeat units lie at residues 740 to 824 and 837 to 930; these read KLLN…REDH and LQTQ…AVVQ. The 58-residue stretch at 941 to 998 folds into the SH3 domain; it reads RGRLPLLAVCDYKQVEVTVHKGDECQLVGPAQPSHWKVLSSSGSEAAVPSVCFLVPPP. A required for interaction with intermediate filament proteins region spans residues 964–4574; it reads ECQLVGPAQP…VGAYSKYLTC (3611 aa). Ser1047 carries the phosphoserine modification. One copy of the Spectrin 4 repeat lies at 1315–1415; it reads RERVAQLLER…QRFAKQYINA (101 aa). Residue Ser1435 is modified to Phosphoserine. Residues 1469–2756 adopt a coiled-coil conformation; it reads QYIKFISETL…AHSEEVTASQ (1288 aa). The segment at 1471 to 2755 is central fibrous rod domain; that stretch reads IKFISETLRR…LAHSEEVTAS (1285 aa). The disordered stretch occupies residues 1618 to 1650; the sequence is RAEEAEAQKRQAQEEAERLRRQVQDESQRKRQA. Position 1721 is a phosphoserine (Ser1721). An N6-acetyllysine modification is found at Lys1725. The residue at position 1732 (Ser1732) is a Phosphoserine. Disordered regions lie at residues 1794–1836, 2105–2139, and 2217–2307; these read LAQA…KQRQ, EAARQRQLAAEEERRRREAEERVQKSLAAEEEAAR, and RGEA…MEKH. 3 stretches are compositionally biased toward basic and acidic residues: residues 1798–1836, 2105–2128, and 2217–2258; these read EAEKQKEEAEREARRRGKAEEQAVRQRELAEQELEKQRQ, EAARQRQLAAEEERRRREAEERVQ, and RGEA…KQSA. Over residues 2259–2272 the composition is skewed to low complexity; it reads EEQAQARAQAQAAA. Residues 2273–2288 are compositionally biased toward basic and acidic residues; sequence EKLRKEAEQEAARRAQ. Ser2631 is subject to Phosphoserine. N6-acetyllysine is present on Lys2636. Disordered stretches follow at residues 2668–2707 and 2763–2784; these read REEQQRQQQQMEQERQRLVASMEEARRRQHEAEEGVRRKQ and LPNGRDALDGPAAEAEPEHSFD. The span at 2679-2707 shows a compositional bias: basic and acidic residues; sequence EQERQRLVASMEEARRRQHEAEEGVRRKQ. A globular 2 region spans residues 2756–4684; that stretch reads QVAATKTLPN…SLGGPESAVA (1929 aa). Ser2782 and Ser2802 each carry phosphoserine. 5 Plectin repeats span residues 2826 to 2863, 2864 to 2901, 2902 to 2939, 2940 to 2977, and 2981 to 3015; these read RHYLQGRSSIAGLLLKATNEKLSVYAALQRQLLSPGTA, LILLEAQAASGFLLDPVRNRRLTVNEAVKEGVVGPELH, HKLLSAERAVTGYKDPYTGQQISLFQAMQKGLIVREHG, IRLLEAQIATGGVIDPVHSHRVPVDVAYRRGYFDEEMN, and ADPSDDTKGFFDPNTHENLTYLQLLERCVEDPETG. Thr2886 carries the phosphothreonine modification. A Phosphotyrosine modification is found at Tyr3033. Ser3036 is subject to Phosphoserine. 2 positions are modified to N6-acetyllysine: Lys3053 and Lys3091. Plectin repeat units lie at residues 3116-3153, 3154-3191, 3192-3229, 3230-3267, 3268-3305, and 3306-3343; these read SLVPAAELLESRVIDRELYQQLQRGERSVRDVAEVDTV, RRALRGANVIAGVWLEEAGQKLSIYNALKKDLLPSDMA, VALLEAQAGTGHIIDPATSARLTVDEAVRAGLVGPEFH, EKLLSAEKAVTGYRDPYTGQSVSLFQALKKGLIPREQG, LRLLDAQLSTGGIVDPSKSHRVPLDVACARGCLDEETS, and RALSAPRADAKAYSDPSTGEPATYGELQQRCRPDQLTG. Positions 3310-3331 are disordered; that stretch reads APRADAKAYSDPSTGEPATYGE. Position 3362 is a phosphotyrosine (Tyr3362). An N6-acetyllysine modification is found at Lys3420. 5 Plectin repeats span residues 3485–3522, 3523–3560, 3561–3598, 3599–3636, and 3640–3674; these read RTLLQGSGCLAGIYLEDTKEKVSIYEAMRRGLLRATTA, ALLLEAQAATGFLVDPVRNQRLYVHEAVKAGVVGPELH, EQLLSAEKAVTGYRDPYSGSTISLFQAMQKGLVLRQHG, IRLLEAQIATGGIIDPVHSHRVPVDVAYQRGYFSEEMN, and ADPSDDTKGFFDPNTHENLTYRQLLERCVEDPETG. A Phosphoserine modification is found at Ser3580. At Thr3785 the chain carries Phosphothreonine. 5 Plectin repeats span residues 3820–3857, 3858–3895, 3896–3933, 3934–3971, and 3975–4008; these read WCYLYGTGSVAGVYLPGSRQTLSIYQALKKGLLSAEVA, RLLLEAQAATGFLLDPVKGERLTVDEAVRKGLVGPELH, DRLLSAERAVTGYRDPYTEQTISLFQAMKKELIPTEEA, LRLLDAQLATGGIVDPRLGFHLPLEVAYQRGYLNKDTH, and SEPSEVRSYVDPSTDERLSYTQLLRRCRRDDGTG. The required for interaction with type2 keratins, DES and VIM stretch occupies residues 3956 to 4293; it reads PLEVAYQRGY…ETGKEMSVYE (338 aa). Position 4030 is a phosphothreonine (Thr4030). A Phosphoserine modification is found at Ser4054. Plectin repeat units lie at residues 4063-4100, 4101-4138, 4139-4176, 4177-4214, 4218-4252, 4265-4305, and 4319-4356; these read QKFLEGTSCIAGVFVDATKERLSVYQAMKKGIIRPGTA, FELLEAQAATGYVIDPIKGLKLTVEEAVRMGIVGPEFK, DKLLSAERAVTGYKDPYSGKLISLFQAMKKGLILKDHG, IRLLEAQIATGGIIDPEESHRLPVEVAYKRGLFDEEMN, TDPSDDTKGFFDPNTEENLTYLQLMERCITDPQTG, RKTS…HQTY, and TISSSDGVVKSMIIDRRSGRQYDIDDAIAKNLIDRSAL. A binding to intermediate filaments region spans residues 4250–4300; the sequence is QTGLCLLPLKEKKRERKTSSKSSVRKRRVVIVDPETGKEMSVYEAYRKGLI. A phosphoserine mark is found at Ser4382, Ser4384, Ser4385, Ser4386, Ser4389, Ser4390, Ser4391, and Ser4392. A Phosphotyrosine modification is found at Tyr4393. 3 positions are modified to phosphoserine: Ser4396, Ser4400, and Ser4406. Plectin repeat units follow at residues 4408–4445, 4446–4483, 4484–4521, 4522–4559, and 4560–4597; these read SDPTEETGPVAGILDTETLEKVSITEAMHRNLVDNITG, QRLLEAQACTGGIIDPSTGERFPVTDAVNKGLVDKIMV, DRINLAQKAFCGFEDPRTKTKMSAAQALKKGWLYYEAG, QRFLEVQYLTGGLIEPDTPGRVPLDEALQRGTVDARTA, and QKLRDVGAYSKYLTCPKTKLKISYKDALDRSMVEEGTG. Thr4411 carries the post-translational modification Phosphothreonine. The segment at 4505–4574 is required for efficient interaction with KRT5 and KRT14 heterodimers; sequence MSAAQALKKG…VGAYSKYLTC (70 aa). Thr4539 carries the post-translational modification Phosphothreonine; by CDK1. A phosphoserine mark is found at Ser4607 and Ser4613. Over residues 4611–4678 the composition is skewed to low complexity; sequence YYSPYSVSGS…ASGSSASLGG (68 aa). The tract at residues 4611–4684 is disordered; the sequence is YYSPYSVSGS…SLGGPESAVA (74 aa). Phosphotyrosine is present on Tyr4615. 3 positions are modified to phosphoserine: Ser4616, Ser4618, and Ser4622. Phosphothreonine is present on Thr4623. The interval 4625-4640 is 4 X 4 AA tandem repeats of G-S-R-X; that stretch reads GSRTGSRTGSRAGSRR. Ser4626 is modified (phosphoserine). 2 positions are modified to omega-N-methylarginine: Arg4627 and Arg4640. A phosphoserine mark is found at Ser4642, Ser4672, and Ser4675.

This sequence belongs to the plakin or cytolinker family. As to quaternary structure, homodimer or homotetramer. Interacts (via actin-binding domain) with SYNE3. Interacts (via calponin-homology (CH) 1 domain) with VIM (via rod region). Interacts (via N-terminus) with DST isoform 2 (via N-terminus). Interacts with FER. Interacts with TOR1A. Interacts with ANK3. Identified in complexes that contain VIM, EZR, AHNAK, BFSP1, BFSP2, ANK2, PLEC, PRX and spectrin. Interacts with COL17A1. In terms of assembly, interacts with KRT14, heterodimers consisting of KRT8 and KRT18, heterodimers consisting of KRT5 and KRT14, heterodimers consisting of KRT14 and KRT15, and heterodimers consisting of KRT1 and KRT10. Interacts with DES and VIM. Phosphorylated by CDK1; regulates dissociation from intermediate filaments during mitosis. As to expression, widely expressed with highest levels in muscle, heart, placenta and spinal cord.

Its subcellular location is the cytoplasm. It localises to the cytoskeleton. It is found in the cell junction. The protein resides in the hemidesmosome. The protein localises to the cell projection. Its subcellular location is the podosome. Its function is as follows. Interlinks intermediate filaments with microtubules and microfilaments and anchors intermediate filaments to desmosomes or hemidesmosomes. Could also bind muscle proteins such as actin to membrane complexes in muscle. May be involved not only in the filaments network, but also in the regulation of their dynamics. Structural component of muscle. Isoform 9 plays a major role in the maintenance of myofiber integrity. In Homo sapiens (Human), this protein is Plectin (PLEC).